Reading from the N-terminus, the 134-residue chain is Protein OPG030 (134 aa).

The BACK domain maps to 88 to 133 (YKENGLRNSFLRQYINNNIEEIRNTDQFLKFDVDSVCDILNNDETI).

This sequence belongs to the orthopoxvirus OPG030 family.

This chain is Protein OPG030 (OPG30), found in Variola virus (isolate Human/India/Ind3/1967) (VARV).